Reading from the N-terminus, the 98-residue chain is NADH-ubiquinone oxidoreductase chain 4L (98 aa).

3 consecutive transmembrane segments (helical) span residues 1 to 21 (MTLI…GLLM), 29 to 49 (ALLC…LTIL), and 61 to 81 (IILL…LVMV).

This sequence belongs to the complex I subunit 4L family. As to quaternary structure, core subunit of respiratory chain NADH dehydrogenase (Complex I) which is composed of 45 different subunits.

The protein localises to the mitochondrion inner membrane. The enzyme catalyses a ubiquinone + NADH + 5 H(+)(in) = a ubiquinol + NAD(+) + 4 H(+)(out). In terms of biological role, core subunit of the mitochondrial membrane respiratory chain NADH dehydrogenase (Complex I) which catalyzes electron transfer from NADH through the respiratory chain, using ubiquinone as an electron acceptor. Part of the enzyme membrane arm which is embedded in the lipid bilayer and involved in proton translocation. The sequence is that of NADH-ubiquinone oxidoreductase chain 4L (MT-ND4L) from Balaenoptera borealis (Sei whale).